Consider the following 318-residue polypeptide: Aspartate carbamoyltransferase catalytic subunit (318 aa).

Carbamoyl phosphate is bound by residues arginine 67 and threonine 68. Lysine 95 lines the L-aspartate pocket. Carbamoyl phosphate-binding residues include arginine 117, histidine 145, and glutamine 148. L-aspartate contacts are provided by arginine 178 and arginine 236. Carbamoyl phosphate-binding residues include glycine 277 and proline 278.

Belongs to the aspartate/ornithine carbamoyltransferase superfamily. ATCase family. In terms of assembly, heterododecamer (2C3:3R2) of six catalytic PyrB chains organized as two trimers (C3), and six regulatory PyrI chains organized as three dimers (R2).

It carries out the reaction carbamoyl phosphate + L-aspartate = N-carbamoyl-L-aspartate + phosphate + H(+). Its pathway is pyrimidine metabolism; UMP biosynthesis via de novo pathway; (S)-dihydroorotate from bicarbonate: step 2/3. In terms of biological role, catalyzes the condensation of carbamoyl phosphate and aspartate to form carbamoyl aspartate and inorganic phosphate, the committed step in the de novo pyrimidine nucleotide biosynthesis pathway. This chain is Aspartate carbamoyltransferase catalytic subunit, found in Roseiflexus castenholzii (strain DSM 13941 / HLO8).